A 275-amino-acid chain; its full sequence is Exosome complex component Rrp42 (275 aa).

This sequence belongs to the RNase PH family. Rrp42 subfamily. As to quaternary structure, component of the archaeal exosome complex. Forms a hexameric ring-like arrangement composed of 3 Rrp41-Rrp42 heterodimers. The hexameric ring associates with a trimer of Rrp4 and/or Csl4 subunits.

The protein resides in the cytoplasm. In terms of biological role, non-catalytic component of the exosome, which is a complex involved in RNA degradation. Contributes to the structuring of the Rrp41 active site. The chain is Exosome complex component Rrp42 from Saccharolobus islandicus (strain Y.N.15.51 / Yellowstone #2) (Sulfolobus islandicus).